The following is a 318-amino-acid chain: MGYDVTRFQGEVDEDLLCPICSGVLEEPVRAPHCEHAFCNACITQWFAQQQICPVDRTVVTLAHLRPVPRIMRNMLSKLQISCDNAGFGCTATLRLDQLQSHLKDCEHNPKRPVTCEEGCGLEMPKDEMPNHNCIKHLRSVVQQQQTKIADLEKTAAEHKHQLAEQKRDIQLLKAYMRAIRSANPNLQNLEESIEYNEILEWVNSLQPARVTRWGGMISTPDAVLQAVIKRSLIDSGCPLSIVNDLIENAHERNWPQGLATLETRQMNRRYYENYVAKRIPGKQAVVVMACENQHMGEDMILEPGLVMIFAHGVEEIL.

The RING-type; degenerate zinc finger occupies 18 to 57 (CPICSGVLEEPVRAPHCEHAFCNACITQWFAQQQICPVDR). The SIAH-type; degenerate zinc finger occupies 78-138 (KLQISCDNAG…MPNHNCIKHL (61 aa)).

The enzyme catalyses S-ubiquitinyl-[E2 ubiquitin-conjugating enzyme]-L-cysteine + [acceptor protein]-L-lysine = [E2 ubiquitin-conjugating enzyme]-L-cysteine + N(6)-ubiquitinyl-[acceptor protein]-L-lysine.. It functions in the pathway protein modification; protein ubiquitination. Functionally, acts as E3 ubiquitin-protein ligase and regulates the degradation of target proteins. This is E3 ubiquitin-protein ligase NRDP1 (rnf41) from Danio rerio (Zebrafish).